The chain runs to 1183 residues: DNA-directed RNA polymerase subunit beta' (1183 aa).

Positions 60, 62, 75, and 78 each coordinate Zn(2+). Positions 449, 451, and 453 each coordinate Mg(2+). Residues C794, C867, C874, and C877 each contribute to the Zn(2+) site.

This sequence belongs to the RNA polymerase beta' chain family. As to quaternary structure, the RNAP catalytic core consists of 2 alpha, 1 beta, 1 beta' and 1 omega subunit. When a sigma factor is associated with the core the holoenzyme is formed, which can initiate transcription. It depends on Mg(2+) as a cofactor. Zn(2+) serves as cofactor.

The catalysed reaction is RNA(n) + a ribonucleoside 5'-triphosphate = RNA(n+1) + diphosphate. Its function is as follows. DNA-dependent RNA polymerase catalyzes the transcription of DNA into RNA using the four ribonucleoside triphosphates as substrates. The protein is DNA-directed RNA polymerase subunit beta' of Caldanaerobacter subterraneus subsp. tengcongensis (strain DSM 15242 / JCM 11007 / NBRC 100824 / MB4) (Thermoanaerobacter tengcongensis).